A 307-amino-acid polypeptide reads, in one-letter code: Small ribosomal subunit biogenesis GTPase RsgA (307 aa).

One can recognise a CP-type G domain in the interval 80–237 (KADLRQTIVS…IVDTPGIKEF (158 aa)). GTP is bound by residues 129 to 132 (NKID) and 180 to 188 (GQSGVGKSS). Cys-261, Cys-266, His-268, and Cys-274 together coordinate Zn(2+).

It belongs to the TRAFAC class YlqF/YawG GTPase family. RsgA subfamily. As to quaternary structure, monomer. Associates with 30S ribosomal subunit, binds 16S rRNA. Zn(2+) is required as a cofactor.

The protein localises to the cytoplasm. Its function is as follows. One of several proteins that assist in the late maturation steps of the functional core of the 30S ribosomal subunit. Helps release RbfA from mature subunits. May play a role in the assembly of ribosomal proteins into the subunit. Circularly permuted GTPase that catalyzes slow GTP hydrolysis, GTPase activity is stimulated by the 30S ribosomal subunit. This Borreliella afzelii (strain PKo) (Borrelia afzelii) protein is Small ribosomal subunit biogenesis GTPase RsgA.